The primary structure comprises 387 residues: 4-hydroxy-3-methylbut-2-en-1-yl diphosphate synthase (flavodoxin) (387 aa).

[4Fe-4S] cluster contacts are provided by Cys280, Cys283, Cys315, and Glu322.

The protein belongs to the IspG family. The cofactor is [4Fe-4S] cluster.

It catalyses the reaction (2E)-4-hydroxy-3-methylbut-2-enyl diphosphate + oxidized [flavodoxin] + H2O + 2 H(+) = 2-C-methyl-D-erythritol 2,4-cyclic diphosphate + reduced [flavodoxin]. Its pathway is isoprenoid biosynthesis; isopentenyl diphosphate biosynthesis via DXP pathway; isopentenyl diphosphate from 1-deoxy-D-xylulose 5-phosphate: step 5/6. Converts 2C-methyl-D-erythritol 2,4-cyclodiphosphate (ME-2,4cPP) into 1-hydroxy-2-methyl-2-(E)-butenyl 4-diphosphate. The chain is 4-hydroxy-3-methylbut-2-en-1-yl diphosphate synthase (flavodoxin) from Mycobacterium bovis (strain ATCC BAA-935 / AF2122/97).